We begin with the raw amino-acid sequence, 145 residues long: Large ribosomal subunit protein bL19 (145 aa).

The protein belongs to the bacterial ribosomal protein bL19 family.

In terms of biological role, this protein is located at the 30S-50S ribosomal subunit interface and may play a role in the structure and function of the aminoacyl-tRNA binding site. In Brucella anthropi (strain ATCC 49188 / DSM 6882 / CCUG 24695 / JCM 21032 / LMG 3331 / NBRC 15819 / NCTC 12168 / Alc 37) (Ochrobactrum anthropi), this protein is Large ribosomal subunit protein bL19.